The chain runs to 377 residues: MRLSMRRALLAAGLALALVLAVHLGQRVLECQAVLGGPRGPRRTMRPEQEDLMMVGADHVEYRYGKAMPLIFVGGVPRSGTTLMRAMLDAHPEVRCGEETRIIPRVLAMRQAWSKSGREKLRLDEAGVTDEVLDAAMQAFILEVIAKHGEPARVLCNKDPFTLKSSVYLSRLFPNSKFLLMVRDGRASVHSMITRKVTIAGFDLSSYRDCLTKWNKAIEVMYAQCMEVGRDKCLPVYYEQLVLHPRRSLKVILDFLGIAWSDAVLHHEDLIGKPGGVSLSKIERSTDQVIKPVNLEALSKWTGHIPGDVLRDMAQIAPMLARLGYDPYANPPNYGNPDPIVINNTHRVLKGDYKTPANLKGYFQVNLNSTSSHLGSS.

Residues 1-8 (MRLSMRRA) are Cytoplasmic-facing. The helical; Signal-anchor for type II membrane protein transmembrane segment at 9-25 (LLAAGLALALVLAVHLG) threads the bilayer. Topologically, residues 26–377 (QRVLECQAVL…NSTSSHLGSS (352 aa)) are lumenal. 78-82 (RSGTT) serves as a coordination point for 3'-phosphoadenylyl sulfate. Cys96 and Cys156 are disulfide-bonded. Glu99 acts as the Proton donor/acceptor in catalysis. The interaction with peptide substrate stretch occupies residues 101-105 (RIIPR). Residues Arg183, Ser191, and Arg195 each contribute to the 3'-phosphoadenylyl sulfate site. An intrachain disulfide couples Cys225 to Cys233. Residues Tyr238, 285 to 294 (STDQVIKPVN), and Lys300 contribute to the 3'-phosphoadenylyl sulfate site. N-linked (GlcNAc...) asparagine glycans are attached at residues Asn343 and Asn368.

This sequence belongs to the protein sulfotransferase family. Homodimer. Can also form heterodimers with TPST1. In terms of processing, N-glycosylated.

The protein localises to the golgi apparatus membrane. The enzyme catalyses L-tyrosyl-[protein] + 3'-phosphoadenylyl sulfate = O-sulfo-L-tyrosine-[protein] + adenosine 3',5'-bisphosphate + H(+). Catalyzes the O-sulfation of tyrosine residues within acidic motifs of polypeptides, using 3'-phosphoadenylyl sulfate (PAPS) as cosubstrate. The chain is Protein-tyrosine sulfotransferase 2 (TPST2) from Bos taurus (Bovine).